A 487-amino-acid chain; its full sequence is Glutamyl-tRNA(Gln) amidotransferase subunit A (487 aa).

Lys78 serves as the catalytic Charge relay system. The span at 135–144 (SAYQTTTNPW) shows a compositional bias: polar residues. Positions 135–155 (SAYQTTTNPWDASRVPGGSSG) are disordered. Catalysis depends on Ser153, which acts as the Charge relay system. Catalysis depends on Ser177, which acts as the Acyl-ester intermediate.

The protein belongs to the amidase family. GatA subfamily. Heterotrimer of A, B and C subunits.

The enzyme catalyses L-glutamyl-tRNA(Gln) + L-glutamine + ATP + H2O = L-glutaminyl-tRNA(Gln) + L-glutamate + ADP + phosphate + H(+). Its function is as follows. Allows the formation of correctly charged Gln-tRNA(Gln) through the transamidation of misacylated Glu-tRNA(Gln) in organisms which lack glutaminyl-tRNA synthetase. The reaction takes place in the presence of glutamine and ATP through an activated gamma-phospho-Glu-tRNA(Gln). The sequence is that of Glutamyl-tRNA(Gln) amidotransferase subunit A from Maridesulfovibrio salexigens (strain ATCC 14822 / DSM 2638 / NCIMB 8403 / VKM B-1763) (Desulfovibrio salexigens).